We begin with the raw amino-acid sequence, 127 residues long: Small ribosomal subunit protein eS8 (127 aa).

The segment at 1–31 is disordered; sequence MTIFQGKSGKKATGGSLKQSRKKRRFELGRE.

The protein belongs to the eukaryotic ribosomal protein eS8 family. Part of the 30S ribosomal subunit.

The chain is Small ribosomal subunit protein eS8 (rps8e) from Thermoplasma acidophilum (strain ATCC 25905 / DSM 1728 / JCM 9062 / NBRC 15155 / AMRC-C165).